The primary structure comprises 445 residues: Transcription termination factor MTERF15, mitochondrial (445 aa).

A mitochondrion-targeting transit peptide spans 1 to 25 (MASKLKTFINLRDYPITLFNQIRSL).

The protein belongs to the mTERF family.

The protein resides in the mitochondrion. Transcription termination factor required for mitochondrial NAD2 intron 3 splicing and normal membrane respiratory chain Complex I activity. Essential for normal plant growth and development. Binds to RNA but not to double-stranded DNA. The protein is Transcription termination factor MTERF15, mitochondrial of Arabidopsis thaliana (Mouse-ear cress).